The following is a 241-amino-acid chain: Ribose-5-phosphate isomerase A (241 aa).

Residues Thr28–Thr31, Asp83–Asp86, and Lys96–Gly99 each bind substrate. Glu105 functions as the Proton acceptor in the catalytic mechanism. Residue Lys123 participates in substrate binding.

It belongs to the ribose 5-phosphate isomerase family. Homodimer.

It carries out the reaction aldehydo-D-ribose 5-phosphate = D-ribulose 5-phosphate. It participates in carbohydrate degradation; pentose phosphate pathway; D-ribose 5-phosphate from D-ribulose 5-phosphate (non-oxidative stage): step 1/1. Its function is as follows. Catalyzes the reversible conversion of ribose-5-phosphate to ribulose 5-phosphate. The polypeptide is Ribose-5-phosphate isomerase A (Rhodopseudomonas palustris (strain BisA53)).